The primary structure comprises 417 residues: Serine hydroxymethyltransferase 1 (417 aa).

(6S)-5,6,7,8-tetrahydrofolate is bound by residues Leu121 and 125–127 (GHL). Lys230 carries the post-translational modification N6-(pyridoxal phosphate)lysine. 355–357 (SPF) serves as a coordination point for (6S)-5,6,7,8-tetrahydrofolate.

Belongs to the SHMT family. In terms of assembly, homodimer. Pyridoxal 5'-phosphate is required as a cofactor.

Its subcellular location is the cytoplasm. The enzyme catalyses (6R)-5,10-methylene-5,6,7,8-tetrahydrofolate + glycine + H2O = (6S)-5,6,7,8-tetrahydrofolate + L-serine. Its pathway is one-carbon metabolism; tetrahydrofolate interconversion. The protein operates within amino-acid biosynthesis; glycine biosynthesis; glycine from L-serine: step 1/1. Functionally, catalyzes the reversible interconversion of serine and glycine with tetrahydrofolate (THF) serving as the one-carbon carrier. This reaction serves as the major source of one-carbon groups required for the biosynthesis of purines, thymidylate, methionine, and other important biomolecules. Also exhibits THF-independent aldolase activity toward beta-hydroxyamino acids, producing glycine and aldehydes, via a retro-aldol mechanism. The chain is Serine hydroxymethyltransferase 1 from Pseudomonas syringae pv. tomato (strain ATCC BAA-871 / DC3000).